The sequence spans 387 residues: GTP-binding protein 10 (387 aa).

The Obg domain maps to 13-148 (GNFIDKLRLF…RIIHLDLKLI (136 aa)). The 196-residue stretch at 149-344 (ADVGLVGFPN…LKNCIRKSLD (196 aa)) folds into the OBG-type G domain. Residues 155–162 (GFPNAGKS), 202–206 (DLPGL), and 278–281 (NKMD) each bind GTP.

It belongs to the TRAFAC class OBG-HflX-like GTPase superfamily. OBG GTPase family.

It localises to the nucleus. It is found in the nucleolus. Its subcellular location is the chromosome. In terms of biological role, may be involved in the ribosome maturation process. Complements an ObgE(CgtA) function in E.coli ribosome maturation. Plays a role of GTPase in vitro. When missing, disorganization of the nucleolar architecture is observed. The sequence is that of GTP-binding protein 10 (GTPBP10) from Homo sapiens (Human).